We begin with the raw amino-acid sequence, 233 residues long: tRNA (guanine-N(1)-)-methyltransferase (233 aa).

S-adenosyl-L-methionine contacts are provided by residues G110 and 130–135 (IGDYVM).

It belongs to the RNA methyltransferase TrmD family. Homodimer.

The protein resides in the cytoplasm. The catalysed reaction is guanosine(37) in tRNA + S-adenosyl-L-methionine = N(1)-methylguanosine(37) in tRNA + S-adenosyl-L-homocysteine + H(+). Its function is as follows. Specifically methylates guanosine-37 in various tRNAs. This is tRNA (guanine-N(1)-)-methyltransferase from Finegoldia magna (strain ATCC 29328 / DSM 20472 / WAL 2508) (Peptostreptococcus magnus).